The chain runs to 514 residues: Ubiquitin carboxyl-terminal hydrolase 22 (514 aa).

The segment at 10–127 adopts a UBP-type zinc-finger fold; that stretch reads PGCAHLGSFK…KEEQRKAWKM (118 aa). Zn(2+) contacts are provided by C12, H14, C52, C55, C65, C68, C73, H78, H82, H88, C101, and C104. K118 carries the N6-acetyllysine modification. The residue at position 136 (T136) is a Phosphothreonine. Positions 165 to 509 constitute a USP domain; the sequence is RGLINLGNTC…EGYLLFYHKQ (345 aa). C174 serves as the catalytic Nucleophile. Phosphoserine is present on S226. Catalysis depends on H468, which acts as the Proton acceptor.

It belongs to the peptidase C19 family. UBP8 subfamily. Component of some SAGA transcription coactivator-HAT complexes, at least composed of ATXN7, ATXN7L3, ENY2, GCN5L2, SUPT3H, TAF10, TRRAP and USP22. Within the SAGA complex, ATXN7L3, ENY2 and USP22 form a subcomplex required for histone deubiquitination. Interacts directly with ATXN7L3; leading to its recruitment to the SAGA complex. Interacts with ATXN7L3 and weakly with ATXN7L3B. Interacts with MED1. Post-translationally, phosphorylated in G2/M phase, but not in G1 phase by CDK1. Ubiquitinated and subsequently degraded in a CDC20-dependent manner.

The protein localises to the nucleus. The protein resides in the cytoplasm. It catalyses the reaction Thiol-dependent hydrolysis of ester, thioester, amide, peptide and isopeptide bonds formed by the C-terminal Gly of ubiquitin (a 76-residue protein attached to proteins as an intracellular targeting signal).. Deubiquitinase that plays a role in several cellular processes including transcriptional regulation, cell cycle progression or innate immunity. As part of the transcription regulatory histone acetylation (HAT) complex SAGA, catalyzes the deubiquitination of both histones H2A and H2B, thereby acting as a transcriptional coactivator. Recruited to specific gene promoters by activators such as MYC, where it is required for transcription. Facilitates cell-cycle progression by stabilizing CCNB1 and antagonizing its proteasome-mediated degradation in a cell cycle-specific manner. Modulates cell cycle progression and apoptosis also by antagonizing TP53 transcriptional activation through deacetylase SIRT1 stabilization. Plays multiple roles in immunity and inflammation. Participates in antiviral response by deubiquitinating the importin KPNA2, leading to IRF3 nuclear translocation and subsequent type I interferon production. Acts as a central regulator of type III IFN signaling by negatively regulating STING1 activation and ubiquitination. Inhibits NLRP3 inflammasome activation by promoting NLRP3 degradation through ATG5-dependent autophagy. Deubiquitinates CD274 to induce its stabilization and thereby participates in maintenance of immune tolerance to self. Controls necroptotic cell death by regulating RIPK3 phosphorylation and ubiquitination. During bacterial infection, promotes pro-inflammatory response by targeting TRAF6 and removing its 'Lys-48'-linked polyubiquitination. In Bos taurus (Bovine), this protein is Ubiquitin carboxyl-terminal hydrolase 22 (USP22).